The primary structure comprises 346 residues: MIKISIDAMGGDFGPEVVIPGAAKAFERHPDIRFIFFGLPAQVEPVLARYPKLKEASEFRASEVAIGMDDKPSQALRAGRGKSSMWQAIEAVKTGDADACVSAGNTGALMAMSKFCLRMMSDVERPAIAGIWPTLRGESIVLDIGATIGADARQLVDYAVMGAGMARALFEVRKPTVGLLNVGTEEVKGLDEIKEAGQILRDTPLDGLEYSGFVEGNDIGKGTVDAVVTEGFTGNIALKTAEGTARQMAELLRQAMSRTLLAKIGYVFAKGAFDRLREKMDPNKVNGGVFLGLSGIVIKSHGGANAEGFCSAVEVGYDMVRNRLLEKIEADLAHFHHSHSHVSSKA.

The protein belongs to the PlsX family. Homodimer. Probably interacts with PlsY.

It localises to the cytoplasm. The enzyme catalyses a fatty acyl-[ACP] + phosphate = an acyl phosphate + holo-[ACP]. It functions in the pathway lipid metabolism; phospholipid metabolism. In terms of biological role, catalyzes the reversible formation of acyl-phosphate (acyl-PO(4)) from acyl-[acyl-carrier-protein] (acyl-ACP). This enzyme utilizes acyl-ACP as fatty acyl donor, but not acyl-CoA. This Brucella melitensis biotype 2 (strain ATCC 23457) protein is Phosphate acyltransferase.